A 111-amino-acid polypeptide reads, in one-letter code: uncharacterized protein (111 aa).

The protein belongs to the asfivirus E111R family.

This is an uncharacterized protein from African swine fever virus (isolate Pig/Kenya/KEN-50/1950) (ASFV).